Here is a 32-residue protein sequence, read N- to C-terminus: Alpha-conotoxin RgIA (32 aa).

A propeptide spanning residues 1–19 (SNKRKNAAMLDMIAQHAIR) is cleaved from the precursor. Intrachain disulfides connect Cys-21/Cys-27 and Cys-22/Cys-31.

It belongs to the conotoxin A superfamily. Post-translationally, the disulfide bond CysI-CysIII is important for alpha-9-alpha-10 subtype inhibition, whereas the bond CysII-CysIV contributes to GABA(B) modulation. As to expression, expressed by the venom duct.

It localises to the secreted. Functionally, this toxin target two types of receptors, the nicotinic acetylcholine receptor (nAChR) and the G-protein-coupled receptor GABA(B). It specifically inhibits the alpha-9-alpha-10/CHRNA9-CHRNA10 nAChR, with preference for rat receptors. It interacts with the alpha-10(+)/alpha-9(-)interface of the receptor. It shows a two order of magnitude species difference potency for the rat versus human alpha-9-alpha-10 nAChR, due to the Thr-86 located in the alpha-9 nAChR subunit. This toxin also shows inhibition of high voltage-activated (HVA) calcium channels (Cav2.2) by acting on GABA(B) receptors (GABBR1 and GABBR2). In vivo, this toxin produces an acute antinociceptive effect in peripheral nerve-injured rats, which may be related to the inhibition of immune cell buildup at the site of nerve injury. In addition, when intramuscularly injected into rats following chronic constriction injury of the sciatic nerve, this toxin protects peripheral nervous tissues as well as prevents central maladaptive plasticity by inhibiting glial cell activation. This chain is Alpha-conotoxin RgIA, found in Conus regius (Crown cone).